Here is a 188-residue protein sequence, read N- to C-terminus: F7-2 fimbrial protein (188 aa).

Positions 1-21 (MIKSVIAGAVAMAVVSFGAYA) are cleaved as a signal peptide. Cys-43 and Cys-82 are joined by a disulfide.

It belongs to the fimbrial protein family.

It localises to the fimbrium. In terms of biological role, fimbriae (also called pili), polar filaments radiating from the surface of the bacterium to a length of 0.5-1.5 micrometers and numbering 100-300 per cell, enable bacteria to colonize the epithelium of specific host organs. This chain is F7-2 fimbrial protein (F7-2), found in Escherichia coli O6:H1 (strain CFT073 / ATCC 700928 / UPEC).